Consider the following 244-residue polypeptide: MSTKMQADRIADATGTDEGAVASGKSIKATYVYEAPVRLWHWVNALAIVVLAVTGFFIGSPPATRPGEASANFLMGYIRFAHFVAAYIFAIGMLGRIYWATAGNHHSRELFSVPVFTRAYWQEVISMLRWYAFLSARPSRYVGHNPLARFAMFFIFFLSSVFMILTGFAMYGEGAQMGSWQERMFGWVIPLLGQSQDVHTWHHLGMWFIVVFVIVHVYAAIREDIMGRQSVVSTMVSGYRTFKD.

Transmembrane regions (helical) follow at residues L39–G59, F73–M93, F150–Y171, and L204–I221.

Belongs to the HupC/HyaC/HydC family.

The protein localises to the cell membrane. Probable b-type cytochrome. In Cupriavidus necator (strain ATCC 17699 / DSM 428 / KCTC 22496 / NCIMB 10442 / H16 / Stanier 337) (Ralstonia eutropha), this protein is Probable Ni/Fe-hydrogenase B-type cytochrome subunit (hoxZ).